Consider the following 100-residue polypeptide: Putative pterin-4-alpha-carbinolamine dehydratase (100 aa).

The protein belongs to the pterin-4-alpha-carbinolamine dehydratase family.

The catalysed reaction is (4aS,6R)-4a-hydroxy-L-erythro-5,6,7,8-tetrahydrobiopterin = (6R)-L-erythro-6,7-dihydrobiopterin + H2O. This chain is Putative pterin-4-alpha-carbinolamine dehydratase, found in Bradyrhizobium diazoefficiens (strain JCM 10833 / BCRC 13528 / IAM 13628 / NBRC 14792 / USDA 110).